The primary structure comprises 319 residues: Probable casein kinase II subunit alpha homolog (319 aa).

Residues 37-316 (YQIYQRMGRG…ADECLRHPLF (280 aa)) form the Protein kinase domain. ATP-binding positions include 43 to 51 (MGRGKYSEV) and Lys64. The Proton acceptor role is filled by Asp151.

It belongs to the protein kinase superfamily. Ser/Thr protein kinase family. CK2 subfamily. Tetramer composed of two alpha chains, one beta chain and one beta' chain.

It catalyses the reaction L-seryl-[protein] + ATP = O-phospho-L-seryl-[protein] + ADP + H(+). The enzyme catalyses L-threonyl-[protein] + ATP = O-phospho-L-threonyl-[protein] + ADP + H(+). In terms of biological role, catalytic subunit of a constitutively active serine/threonine-protein kinase complex that phosphorylates a large number of substrates containing acidic residues C-terminal to the phosphorylated serine or threonine. This is Probable casein kinase II subunit alpha homolog (CKA1) from Encephalitozoon cuniculi (strain GB-M1) (Microsporidian parasite).